The sequence spans 172 residues: MNLKEHIRVIENFPKEGISFKDVTTILQDGKVLNYTIDKLAENLKDKKIDKIVGPEARGFLFGTPLAYKLGVGFVPVRKKGKLPYETISCKYDLEYGQDELQIHKDSIKKGDKVAIVDDLLATGGTIASVVKLVEELGGEVVNVSFVIELTDLKGKDKLEGYDINSLVQYNI.

The protein belongs to the purine/pyrimidine phosphoribosyltransferase family. Homodimer.

The protein resides in the cytoplasm. It carries out the reaction AMP + diphosphate = 5-phospho-alpha-D-ribose 1-diphosphate + adenine. It functions in the pathway purine metabolism; AMP biosynthesis via salvage pathway; AMP from adenine: step 1/1. Functionally, catalyzes a salvage reaction resulting in the formation of AMP, that is energically less costly than de novo synthesis. This chain is Adenine phosphoribosyltransferase, found in Clostridium botulinum (strain ATCC 19397 / Type A).